Reading from the N-terminus, the 461-residue chain is Transcriptional activator RocR (461 aa).

The residue at position 57 (Asp-57) is a 4-aspartylphosphate. A Sigma-54 factor interaction domain is found at 143–372; it reads ILGTSPAIQD…EHMIEGAMNF (230 aa). Residues 171–178 and 233–242 each bind ATP; these read GETGTGKE and AHGGTLLLDE. A DNA-binding region (H-T-H motif) is located at residues 434 to 453; the sequence is ISKAAQELGISRQSLQYRLK.

In terms of biological role, positive regulator of arginine catabolism. Controls the transcription of the two operons rocABC and rocDEF and probably acts by binding to the corresponding upstream activating sequences. The sequence is that of Transcriptional activator RocR (rocR) from Bacillus subtilis (strain 168).